The chain runs to 317 residues: Methionyl-tRNA formyltransferase (317 aa).

112–115 (SILP) provides a ligand contact to (6S)-5,6,7,8-tetrahydrofolate.

The protein belongs to the Fmt family.

The catalysed reaction is L-methionyl-tRNA(fMet) + (6R)-10-formyltetrahydrofolate = N-formyl-L-methionyl-tRNA(fMet) + (6S)-5,6,7,8-tetrahydrofolate + H(+). Its function is as follows. Attaches a formyl group to the free amino group of methionyl-tRNA(fMet). The formyl group appears to play a dual role in the initiator identity of N-formylmethionyl-tRNA by promoting its recognition by IF2 and preventing the misappropriation of this tRNA by the elongation apparatus. The polypeptide is Methionyl-tRNA formyltransferase (Actinobacillus succinogenes (strain ATCC 55618 / DSM 22257 / CCUG 43843 / 130Z)).